The following is a 511-amino-acid chain: 2-isopropylmalate synthase (511 aa).

In terms of domain architecture, Pyruvate carboxyltransferase spans 5–267; sequence LIVFDTTLRD…DTRIDATQIV (263 aa). Mn(2+) contacts are provided by D14, H202, H204, and N238. The tract at residues 393-511 is regulatory domain; the sequence is RLVASRFHSE…SKLERLNPQL (119 aa).

The protein belongs to the alpha-IPM synthase/homocitrate synthase family. LeuA type 1 subfamily. In terms of assembly, homodimer. Requires Mn(2+) as cofactor.

The protein resides in the cytoplasm. It catalyses the reaction 3-methyl-2-oxobutanoate + acetyl-CoA + H2O = (2S)-2-isopropylmalate + CoA + H(+). Its pathway is amino-acid biosynthesis; L-leucine biosynthesis; L-leucine from 3-methyl-2-oxobutanoate: step 1/4. Catalyzes the condensation of the acetyl group of acetyl-CoA with 3-methyl-2-oxobutanoate (2-ketoisovalerate) to form 3-carboxy-3-hydroxy-4-methylpentanoate (2-isopropylmalate). In Aromatoleum aromaticum (strain DSM 19018 / LMG 30748 / EbN1) (Azoarcus sp. (strain EbN1)), this protein is 2-isopropylmalate synthase.